We begin with the raw amino-acid sequence, 207 residues long: Hydrogenase expression/formation protein HoxM (207 aa).

Ni(2+) contacts are provided by Glu19, Asp65, and His96.

This sequence belongs to the peptidase A31 family.

In terms of biological role, not known. Could be involved in the processing of hydrogenase. This chain is Hydrogenase expression/formation protein HoxM (hoxM), found in Azotobacter vinelandii.